A 120-amino-acid polypeptide reads, in one-letter code: Glycine cleavage system H protein (120 aa).

The 83-residue stretch at 19–101 (DGTVGISDFA…YTDGWLFRLD (83 aa)) folds into the Lipoyl-binding domain. Lys-60 carries the post-translational modification N6-lipoyllysine.

The protein belongs to the GcvH family. The glycine cleavage system is composed of four proteins: P, T, L and H. (R)-lipoate is required as a cofactor.

Its function is as follows. The glycine cleavage system catalyzes the degradation of glycine. The H protein shuttles the methylamine group of glycine from the P protein to the T protein. The protein is Glycine cleavage system H protein of Deinococcus geothermalis (strain DSM 11300 / CIP 105573 / AG-3a).